The chain runs to 353 residues: Rhodopsin (353 aa).

Residues 1-36 lie on the Extracellular side of the membrane; it reads MNGTEGPYFYIPMVNTTGIVRSPYEYPQYYLVNPAA. Asparagine 2 and asparagine 15 each carry an N-linked (GlcNAc...) asparagine glycan. The helical transmembrane segment at 37–61 threads the bilayer; the sequence is YAALGAYMFLLILVGFPINFLTLYV. Residues 62-73 lie on the Cytoplasmic side of the membrane; that stretch reads TIEHKKLRTPLN. Residues 74–96 form a helical membrane-spanning segment; the sequence is YILLNLAVANLFMVFGGFTTTMY. The Extracellular segment spans residues 97-110; the sequence is TSMHGYFVLGRLGC. An intrachain disulfide couples cysteine 110 to cysteine 187. The helical transmembrane segment at 111-133 threads the bilayer; that stretch reads NLEGFFATLGGEIALWSLVVLAI. Positions 134 to 136 match the 'Ionic lock' involved in activated form stabilization motif; sequence ERW. Over 134–152 the chain is Cytoplasmic; that stretch reads ERWMVVCKPISNFRFGEDH. Residues 153–173 form a helical membrane-spanning segment; sequence AIMGLAFTWVMAAACAVPPLV. At 174–202 the chain is on the extracellular side; sequence GWSRYIPEGMQCSCGIDYYTRAEGFNNES. Residue asparagine 200 is glycosylated (N-linked (GlcNAc...) asparagine). Residues 203–224 traverse the membrane as a helical segment; sequence FVIYMFVCHFLIPLVVVFFCYG. Residues 225 to 252 lie on the Cytoplasmic side of the membrane; that stretch reads RLLCAVKEAAAAQQESETTQRAEREVSR. The helical transmembrane segment at 253–274 threads the bilayer; that stretch reads MVVIMVVAFLICWCPYAGVAWY. The Extracellular segment spans residues 275–286; that stretch reads IFTHQGSEFGPL. A helical transmembrane segment spans residues 287 to 308; that stretch reads FMTFPAFFAKSSSIYNPMIYIC. Lysine 296 bears the N6-(retinylidene)lysine mark. The Cytoplasmic portion of the chain corresponds to 309–353; it reads MNKQFRHCMITTLCCGKNPFEEEEGASTTSKTEASSVSSSSVSPA. 2 S-palmitoyl cysteine lipidation sites follow: cysteine 322 and cysteine 323. The interval 330 to 353 is disordered; that stretch reads EEEGASTTSKTEASSVSSSSVSPA. The span at 334–353 shows a compositional bias: low complexity; it reads ASTTSKTEASSVSSSSVSPA.

This sequence belongs to the G-protein coupled receptor 1 family. Opsin subfamily. In terms of processing, phosphorylated on some or all of the serine and threonine residues present in the C-terminal region. Post-translationally, contains one covalently linked retinal chromophore.

It localises to the membrane. The protein localises to the cell projection. The protein resides in the cilium. Its subcellular location is the photoreceptor outer segment. Photoreceptor required for image-forming vision at low light intensity. While most salt water fish species use retinal as chromophore, most freshwater fish use 3-dehydroretinal, or a mixture of retinal and 3-dehydroretinal. Light-induced isomerization of 11-cis to all-trans retinal triggers a conformational change that activates signaling via G-proteins. Subsequent receptor phosphorylation mediates displacement of the bound G-protein alpha subunit by arrestin and terminates signaling. The sequence is that of Rhodopsin (rho) from Chelon saliens (Leaping mullet).